The sequence spans 56 residues: PI-stichotoxin-Hcr2m (56 aa).

The BPTI/Kunitz inhibitor domain occupies 4–54 (CLEPKVVGPCTAYLRRFYFDSETGKCTPFIYGGCEGNGNNFETLRACRAIC). 3 disulfides stabilise this stretch: cysteine 4–cysteine 54, cysteine 13–cysteine 37, and cysteine 29–cysteine 50.

This sequence belongs to the venom Kunitz-type family. Sea anemone type 2 potassium channel toxin subfamily.

The protein localises to the secreted. Its subcellular location is the nematocyst. Its function is as follows. This recombinant serine protease inhibitor inhibits trypsin (Ki=210 nM). In contrast to other sea anemone serine protease inhibitors, it does not significantly blocks histamine influence on intracellular calcium concentration in murine bone marrow-derived macrophages (tested at 1 and 10 uM). In vitro, it shows cytoprotective activity in the oxidative stress agent 6-hydroxydopamine (6-OHDA)-induced neurotoxicity model. In this model, it decreases reactive oxygen species (ROS) levels, and increases cell viability in a correlated manner. It is possible that the observed effect is due to the ability of this peptides to act as free-radical scavenger. In vivo, it shows analgesic activity, since it increases hot plate and tail flick withdrawal latencies, when using a mice thermal pain stimulation model. The polypeptide is PI-stichotoxin-Hcr2m (Radianthus crispa (Leathery sea anemone)).